The following is a 247-amino-acid chain: Neurotrophic factor BDNF precursor form (247 aa).

An N-terminal signal peptide occupies residues 1 to 18; the sequence is MTILFLTMVISYFGCMKA. Positions 19–128 are excised as a propeptide; the sequence is APMKEANVRG…AANMSMRVRR (110 aa). Residue Asn121 is glycosylated (N-linked (GlcNAc...) asparagine). Intrachain disulfides connect Cys141/Cys208, Cys186/Cys237, and Cys196/Cys239.

Belongs to the NGF-beta family. Monomers and homodimers. Binds to NTRK2/TRKB. Can form heterodimers with other neurotrophin family members, such as NTF3 and NTF4 (in vitro), but the physiological relevance of this is not clear. BDNF precursor form: interacts with the heterodimer formed by NGFR and SORCS2. Mature BDNF has much lower affinity for the heterodimer formed by NGFR and SORCS2. In terms of processing, N-glycosylated and glycosulfated, contrary to mature BDNF. Mature BDNF is produced by proteolytic removal of the propeptide, catalyzed by a FURIN family member. In addition, the precursor form is proteolytically cleaved within the propeptide, but this is not an obligatory intermediate for the production of mature BDNF. Can be converted into mature BDNF by plasmin (PLG).

It is found in the secreted. In terms of biological role, important signaling molecule that activates signaling cascades downstream of NTRK2. During development, promotes the survival and differentiation of selected neuronal populations of the peripheral and central nervous systems. Participates in axonal growth, pathfinding and in the modulation of dendritic growth and morphology. Major regulator of synaptic transmission and plasticity at adult synapses in many regions of the CNS. The versatility of BDNF is emphasized by its contribution to a range of adaptive neuronal responses including long-term potentiation (LTP), long-term depression (LTD), certain forms of short-term synaptic plasticity, as well as homeostatic regulation of intrinsic neuronal excitability. Its function is as follows. Important signaling molecule that activates signaling cascades downstream of NTRK2. Activates signaling cascades via the heterodimeric receptor formed by NGFR and SORCS2. Signaling via NGFR and SORCS2 plays a role in synaptic plasticity and long-term depression (LTD). Binding to NGFR and SORCS2 promotes neuronal apoptosis. Promotes neuronal growth cone collapse. This chain is Neurotrophic factor BDNF precursor form (BDNF), found in Ailurus fulgens (Himalayan red panda).